We begin with the raw amino-acid sequence, 784 residues long: DNA repair and recombination protein RAD54-like (784 aa).

A disordered region spans residues 1–50 (MRRSLAPSQRGPLRPESRHSFTPPLLKKNKRSCQQELEREQELDRKRQSA). Positions 2–9 (RRSLAPSQ) are required for chromatin remodeling, strand pairing activities and coupling of ATPase activity. Position 20 is a phosphoserine (serine 20). At threonine 22 the chain carries Phosphothreonine. Residues 36-47 (ELEREQELDRKR) are compositionally biased toward basic and acidic residues. In terms of domain architecture, Helicase ATP-binding spans 172-346 (EGKRGNFNGC…YSLVNFVNPE (175 aa)). 185–192 (DEMGLGKT) is a binding site for ATP. A DEGH box motif is present at residues 297 to 300 (DEGH). The region spanning 503 to 660 (LLDFMLAAIR…NNESAEKHFT (158 aa)) is the Helicase C-terminal domain. A compositionally biased stretch (low complexity) spans 747-756 (VASAEEAASE). The tract at residues 747–784 (VASAEEAASEQPEEKPDRRKRPSTPLSDDSADEDFLGF) is disordered. Acidic residues predominate over residues 775 to 784 (DSADEDFLGF).

The protein belongs to the SNF2/RAD54 helicase family. As to quaternary structure, interacts (via N-terminus) with spn-A/Rad51.

It localises to the nucleus. Involved in mitotic DNA repair and meiotic recombination. Functions in the recombinational DNA repair pathway. Essential for interhomolog gene conversion (GC), but may have a less important role in intersister GC than spn-A/Rad51. In the presence of DNA, spn-A/Rad51 enhances the ATPase activity of okr/Rad54. The sequence is that of DNA repair and recombination protein RAD54-like from Drosophila erecta (Fruit fly).